We begin with the raw amino-acid sequence, 559 residues long: Amino-acid acetyltransferase, mitochondrial (559 aa).

Positions 162-188 (RLGPKPGSEDPTSELDFTPPETHTLPP) are disordered. The N-acetyltransferase domain occupies 362-538 (LPVQVFHSVS…GSAGLSYVED (177 aa)).

It belongs to the acetyltransferase family.

The protein resides in the mitochondrion. It catalyses the reaction L-glutamate + acetyl-CoA = N-acetyl-L-glutamate + CoA + H(+). It functions in the pathway amino-acid biosynthesis; L-arginine biosynthesis; N(2)-acetyl-L-ornithine from L-glutamate: step 1/4. Its function is as follows. N-acetylglutamate synthase involved in arginine biosynthesis. This chain is Amino-acid acetyltransferase, mitochondrial (ARG2), found in Laccaria bicolor (strain S238N-H82 / ATCC MYA-4686) (Bicoloured deceiver).